Here is a 172-residue protein sequence, read N- to C-terminus: ATP synthase subunit b (172 aa).

A helical transmembrane segment spans residues 18–38 (IVWSLIILVIVAVFFYKFFMP).

The protein belongs to the ATPase B chain family. As to quaternary structure, F-type ATPases have 2 components, F(1) - the catalytic core - and F(0) - the membrane proton channel. F(1) has five subunits: alpha(3), beta(3), gamma(1), delta(1), epsilon(1). F(0) has three main subunits: a(1), b(2) and c(10-14). The alpha and beta chains form an alternating ring which encloses part of the gamma chain. F(1) is attached to F(0) by a central stalk formed by the gamma and epsilon chains, while a peripheral stalk is formed by the delta and b chains.

Its subcellular location is the cell membrane. Functionally, f(1)F(0) ATP synthase produces ATP from ADP in the presence of a proton or sodium gradient. F-type ATPases consist of two structural domains, F(1) containing the extramembraneous catalytic core and F(0) containing the membrane proton channel, linked together by a central stalk and a peripheral stalk. During catalysis, ATP synthesis in the catalytic domain of F(1) is coupled via a rotary mechanism of the central stalk subunits to proton translocation. Component of the F(0) channel, it forms part of the peripheral stalk, linking F(1) to F(0). The sequence is that of ATP synthase subunit b from Bifidobacterium longum (strain DJO10A).